A 310-amino-acid chain; its full sequence is Porphobilinogen deaminase (310 aa).

At Cys-242 the chain carries S-(dipyrrolylmethanemethyl)cysteine.

This sequence belongs to the HMBS family. Monomer. Requires dipyrromethane as cofactor.

It carries out the reaction 4 porphobilinogen + H2O = hydroxymethylbilane + 4 NH4(+). It functions in the pathway porphyrin-containing compound metabolism; protoporphyrin-IX biosynthesis; coproporphyrinogen-III from 5-aminolevulinate: step 2/4. In terms of biological role, tetrapolymerization of the monopyrrole PBG into the hydroxymethylbilane pre-uroporphyrinogen in several discrete steps. The polypeptide is Porphobilinogen deaminase (Shewanella baltica (strain OS223)).